A 389-amino-acid polypeptide reads, in one-letter code: Alanine racemase (389 aa).

The active-site Proton acceptor; specific for D-alanine is the Lys-48. Lys-48 bears the N6-(pyridoxal phosphate)lysine mark. Position 144 (Arg-144) interacts with substrate. Residue Tyr-281 is the Proton acceptor; specific for L-alanine of the active site. Position 329 (Met-329) interacts with substrate.

Belongs to the alanine racemase family. Pyridoxal 5'-phosphate is required as a cofactor.

The catalysed reaction is L-alanine = D-alanine. It functions in the pathway amino-acid biosynthesis; D-alanine biosynthesis; D-alanine from L-alanine: step 1/1. Its function is as follows. Catalyzes the interconversion of L-alanine and D-alanine. May also act on other amino acids. In Leptospira interrogans serogroup Icterohaemorrhagiae serovar copenhageni (strain Fiocruz L1-130), this protein is Alanine racemase (alr).